Reading from the N-terminus, the 103-residue chain is Large ribosomal subunit protein bL21 (103 aa).

It belongs to the bacterial ribosomal protein bL21 family. Part of the 50S ribosomal subunit. Contacts protein L20.

Its function is as follows. This protein binds to 23S rRNA in the presence of protein L20. The sequence is that of Large ribosomal subunit protein bL21 from Borrelia garinii subsp. bavariensis (strain ATCC BAA-2496 / DSM 23469 / PBi) (Borreliella bavariensis).